A 183-amino-acid chain; its full sequence is ATP synthase subunit delta (183 aa).

This sequence belongs to the ATPase delta chain family. As to quaternary structure, F-type ATPases have 2 components, F(1) - the catalytic core - and F(0) - the membrane proton channel. F(1) has five subunits: alpha(3), beta(3), gamma(1), delta(1), epsilon(1). CF(0) has four main subunits: a(1), b(1), b'(1) and c(10-14). The alpha and beta chains form an alternating ring which encloses part of the gamma chain. F(1) is attached to F(0) by a central stalk formed by the gamma and epsilon chains, while a peripheral stalk is formed by the delta, b and b' chains.

The protein localises to the cellular thylakoid membrane. Functionally, f(1)F(0) ATP synthase produces ATP from ADP in the presence of a proton or sodium gradient. F-type ATPases consist of two structural domains, F(1) containing the extramembraneous catalytic core and F(0) containing the membrane proton channel, linked together by a central stalk and a peripheral stalk. During catalysis, ATP synthesis in the catalytic domain of F(1) is coupled via a rotary mechanism of the central stalk subunits to proton translocation. This protein is part of the stalk that links CF(0) to CF(1). It either transmits conformational changes from CF(0) to CF(1) or is implicated in proton conduction. The sequence is that of ATP synthase subunit delta from Prochlorococcus marinus (strain SARG / CCMP1375 / SS120).